Here is a 703-residue protein sequence, read N- to C-terminus: Arf-GAP with GTPase, ANK repeat and PH domain-containing protein 9 (703 aa).

3 disordered regions span residues 249–287 (KRNG…TPTP), 299–323 (FTSE…TIGS), and 427–449 (SSTT…KHLK). Positions 271–286 (QEDPQFSVPPTANTPT) are enriched in polar residues. The segment covering 303 to 318 (KGSDPDKERKAPENHA) has biased composition (basic and acidic residues). The 162-residue stretch at 327-488 (IPIKQGMLLK…WVQAIQSQIL (162 aa)) folds into the PH domain. One can recognise an Arf-GAP domain in the interval 509–629 (AMALQSIQNM…LFLAPLPCTE (121 aa)). The C4-type zinc-finger motif lies at 524–547 (CVDCETQNPKWASLNLGVLMCIEC). The stretch at 631 to 700 (SLGQQLLRAT…WTSWPEMPTG (70 aa)) is one ANK repeat.

The protein belongs to the centaurin gamma-like family.

In terms of biological role, putative GTPase-activating protein. This Homo sapiens (Human) protein is Arf-GAP with GTPase, ANK repeat and PH domain-containing protein 9 (AGAP9).